The primary structure comprises 277 residues: Polar tube protein 2 (277 aa).

A signal peptide spans 1-18 (MLLLLAITAVVSATMVHP). Residue Asn-134 is glycosylated (N-linked (GlcNAc...) asparagine). A compositionally biased stretch (basic and acidic residues) spans 237 to 251 (QKKEVKDTKEGEKSA). A disordered region spans residues 237-277 (QKKEVKDTKEGEKSASQDSDGEGTAEDAEVQQPSADGEGLE). Acidic residues predominate over residues 255–265 (SDGEGTAEDAE).

In terms of assembly, interacts with PTP1 and PTP3.

It is found in the spore polar tube. Its function is as follows. Involved in formation of a polar tube through which the infectious agent is passed on to the host cell. In Encephalitozoon cuniculi (strain GB-M1) (Microsporidian parasite), this protein is Polar tube protein 2 (PTP2).